The chain runs to 340 residues: Adenosine deaminase (340 aa).

His-15 and His-17 together coordinate Zn(2+). Residues His-17, Asp-19, and Gly-172 each coordinate substrate. Residue His-199 participates in Zn(2+) binding. Residue Glu-202 is the Proton donor of the active site. Asp-279 is a Zn(2+) binding site.

The protein belongs to the metallo-dependent hydrolases superfamily. Adenosine and AMP deaminases family. Adenosine deaminase subfamily. It depends on Zn(2+) as a cofactor.

The catalysed reaction is adenosine + H2O + H(+) = inosine + NH4(+). It catalyses the reaction 2'-deoxyadenosine + H2O + H(+) = 2'-deoxyinosine + NH4(+). Catalyzes the hydrolytic deamination of adenosine and 2-deoxyadenosine. The chain is Adenosine deaminase from Streptococcus agalactiae serotype III (strain NEM316).